The sequence spans 80 residues: Exodeoxyribonuclease 7 small subunit (80 aa).

This sequence belongs to the XseB family. In terms of assembly, heterooligomer composed of large and small subunits.

The protein resides in the cytoplasm. It catalyses the reaction Exonucleolytic cleavage in either 5'- to 3'- or 3'- to 5'-direction to yield nucleoside 5'-phosphates.. In terms of biological role, bidirectionally degrades single-stranded DNA into large acid-insoluble oligonucleotides, which are then degraded further into small acid-soluble oligonucleotides. This is Exodeoxyribonuclease 7 small subunit from Rickettsia canadensis (strain McKiel).